A 259-amino-acid polypeptide reads, in one-letter code: 3-deoxy-manno-octulosonate cytidylyltransferase (259 aa).

Belongs to the KdsB family.

The protein localises to the cytoplasm. It carries out the reaction 3-deoxy-alpha-D-manno-oct-2-ulosonate + CTP = CMP-3-deoxy-beta-D-manno-octulosonate + diphosphate. Its pathway is nucleotide-sugar biosynthesis; CMP-3-deoxy-D-manno-octulosonate biosynthesis; CMP-3-deoxy-D-manno-octulosonate from 3-deoxy-D-manno-octulosonate and CTP: step 1/1. It participates in bacterial outer membrane biogenesis; lipopolysaccharide biosynthesis. Its function is as follows. Activates KDO (a required 8-carbon sugar) for incorporation into bacterial lipopolysaccharide in Gram-negative bacteria. The sequence is that of 3-deoxy-manno-octulosonate cytidylyltransferase from Alkalilimnicola ehrlichii (strain ATCC BAA-1101 / DSM 17681 / MLHE-1).